Reading from the N-terminus, the 407-residue chain is Indoleamine 2,3-dioxygenase 2 (407 aa).

His347 provides a ligand contact to heme.

Belongs to the indoleamine 2,3-dioxygenase family. It depends on heme as a cofactor. As to expression, detected in liver, small intestine, spleen, placenta, thymus, lung, brain, kidney, and colon. Also expressed at low level in testis and thyroid. Not expressed in the majority of human tumor samples (&gt;99%).

It carries out the reaction L-tryptophan + O2 = N-formyl-L-kynurenine. It functions in the pathway amino-acid degradation; L-tryptophan degradation via kynurenine pathway; L-kynurenine from L-tryptophan: step 1/2. Its activity is regulated as follows. Activity is inhibited by D-1MT (1-methyl-D-tryptophan) and MTH-trp (methylthiohydantoin-DL-tryptophan) but not L-1MT (1-methyl-L-tryptophan). In terms of biological role, catalyzes the first and rate limiting step of the catabolism of the essential amino acid tryptophan along the kynurenine pathway. Involved in immune regulation. May not play a significant role in tryptophan-related tumoral resistance. The polypeptide is Indoleamine 2,3-dioxygenase 2 (Homo sapiens (Human)).